The primary structure comprises 218 residues: Protein GrpE (218 aa).

Positions 1-21 are enriched in basic and acidic residues; the sequence is MSDKQREAERQQSEDKAHSEA. A disordered region spans residues 1–66; sequence MSDKQREAER…LEEARARAEE (66 aa). Over residues 24–36 the composition is skewed to low complexity; that stretch reads AEAGQAPEAQAAE.

This sequence belongs to the GrpE family. As to quaternary structure, homodimer.

The protein localises to the cytoplasm. Its function is as follows. Participates actively in the response to hyperosmotic and heat shock by preventing the aggregation of stress-denatured proteins, in association with DnaK and GrpE. It is the nucleotide exchange factor for DnaK and may function as a thermosensor. Unfolded proteins bind initially to DnaJ; upon interaction with the DnaJ-bound protein, DnaK hydrolyzes its bound ATP, resulting in the formation of a stable complex. GrpE releases ADP from DnaK; ATP binding to DnaK triggers the release of the substrate protein, thus completing the reaction cycle. Several rounds of ATP-dependent interactions between DnaJ, DnaK and GrpE are required for fully efficient folding. The polypeptide is Protein GrpE (Alkalilimnicola ehrlichii (strain ATCC BAA-1101 / DSM 17681 / MLHE-1)).